Here is a 353-residue protein sequence, read N- to C-terminus: Lactosylceramide 4-alpha-galactosyltransferase (353 aa).

Residues 1–22 (MSKPPDLLLRLLRGAPRQRVCT) lie on the Cytoplasmic side of the membrane. A helical; Signal-anchor for type II membrane protein transmembrane segment spans residues 23–43 (LFIIGFKFTFFVSIMIYWHVV). Residues 44–353 (GEPKEKGQLY…TTHEAMKMYL (310 aa)) lie on the Lumenal side of the membrane. N-linked (GlcNAc...) asparagine glycosylation is present at Asn-121. Positions 192–194 (DTD) match the DXD motif motif. N-linked (GlcNAc...) asparagine glycosylation is present at Asn-203.

Belongs to the glycosyltransferase 32 family. As to expression, ubiquitous. Highly expressed in kidney, heart, spleen, liver, testis and placenta.

The protein resides in the golgi apparatus membrane. The catalysed reaction is a beta-D-Gal-(1-&gt;4)-beta-D-Glc-(1&lt;-&gt;1)-Cer(d18:1(4E)) + UDP-alpha-D-galactose = a globoside Gb3Cer (d18:1(4E)) + UDP + H(+). It catalyses the reaction a beta-D-Gal-(1&lt;-&gt;1')-ceramide + UDP-alpha-D-galactose = alpha-D-Gal-(1-&gt;4)-beta-D-Gal-(1&lt;-&gt;1')-Cer + UDP + H(+). Its pathway is glycolipid biosynthesis. In terms of biological role, catalyzes the transfer of galactose from UDP-alpha-D-galactose to lactosylceramide/beta-D-galactosyl-(1-&gt;4)-beta-D-glucosyl-(1&lt;-&gt;1)-ceramide(d18:1(4E)) to produce globotriaosylceramide/globoside Gb3Cer (d18:1(4E)). Also able to transfer galactose to galactosylceramide/beta-D-Gal-(1&lt;-&gt;1')-Cer. Globoside Gb3Cer is a glycosphingolipid of the globo serie, one of the major types of neutral root structures of glycosphingolipids, that constitute a significant portion of mammalian cell membranes. Globotriaosylceramide/globoside Gb3Cer in blood and tissue cell membranes is the antigen Pk of blood histogroup P. Its function is as follows. (Microbial infection) Globotriaosylceramide is one of the cellular ligands for bacterial verotoxins. The sequence is that of Lactosylceramide 4-alpha-galactosyltransferase (A4GALT) from Homo sapiens (Human).